The following is a 113-amino-acid chain: UPF0145 protein MTH_544 (113 aa).

Belongs to the UPF0145 family.

In Methanothermobacter thermautotrophicus (strain ATCC 29096 / DSM 1053 / JCM 10044 / NBRC 100330 / Delta H) (Methanobacterium thermoautotrophicum), this protein is UPF0145 protein MTH_544.